Consider the following 601-residue polypeptide: Glutathione-regulated potassium-efflux system protein KefB (601 aa).

13 consecutive transmembrane segments (helical) span residues 4 to 24 (SDFL…VPLA), 29 to 49 (IGAV…GLGF), 55 to 75 (EILH…GLEL), 87 to 107 (IFGV…GLLM), 115 to 135 (AAVV…LQLM), 152 to 172 (VLLF…LLAG), 177 to 197 (HFDW…LIGG), 207 to 227 (FIAA…LVLG), 230 to 250 (LFMD…GVLL), 268 to 288 (GLLL…GVLY), 291 to 311 (LLWV…VLYL), 324 to 344 (MQFA…FSTA), and 356 to 376 (ALLL…MKLV). The 120-residue stretch at 400 to 519 (KPQVIVVGFG…AGVTQFSRET (120 aa)) folds into the RCK N-terminal domain.

It belongs to the monovalent cation:proton antiporter 2 (CPA2) transporter (TC 2.A.37) family. KefB subfamily. Interacts with the regulatory subunit KefG.

The protein resides in the cell inner membrane. With respect to regulation, activated by adducts between glutathione and electrophiles. Its function is as follows. Pore-forming subunit of a potassium efflux system that confers protection against electrophiles. Catalyzes K(+)/H(+) antiport. The chain is Glutathione-regulated potassium-efflux system protein KefB from Escherichia coli (strain K12).